A 60-amino-acid polypeptide reads, in one-letter code: Large ribosomal subunit protein bL32 (60 aa).

Residues 1–22 (MAVPARHTSKAKKNKRRTHYKL) are disordered. The span at 7–20 (HTSKAKKNKRRTHY) shows a compositional bias: basic residues.

The protein belongs to the bacterial ribosomal protein bL32 family.

This is Large ribosomal subunit protein bL32 from Streptococcus pyogenes serotype M3 (strain ATCC BAA-595 / MGAS315).